Consider the following 431-residue polypeptide: Tryptophan synthase beta chain 2 (431 aa).

Lys-111 carries the post-translational modification N6-(pyridoxal phosphate)lysine.

The protein belongs to the TrpB family. In terms of assembly, tetramer of two alpha and two beta chains. Pyridoxal 5'-phosphate serves as cofactor.

The enzyme catalyses (1S,2R)-1-C-(indol-3-yl)glycerol 3-phosphate + L-serine = D-glyceraldehyde 3-phosphate + L-tryptophan + H2O. The protein operates within amino-acid biosynthesis; L-tryptophan biosynthesis; L-tryptophan from chorismate: step 5/5. The beta subunit is responsible for the synthesis of L-tryptophan from indole and L-serine. This Sulfurisphaera tokodaii (strain DSM 16993 / JCM 10545 / NBRC 100140 / 7) (Sulfolobus tokodaii) protein is Tryptophan synthase beta chain 2 (trpB2).